The primary structure comprises 365 residues: tRNA-specific 2-thiouridylase MnmA (365 aa).

Residues 6–13 and Leu-32 each bind ATP; that span reads AMSGGVDS. The active-site Nucleophile is Cys-101. Cys-101 and Cys-199 are joined by a disulfide. Gly-125 serves as a coordination point for ATP. Positions 149-151 are interaction with tRNA; it reads KDQ. The active-site Cysteine persulfide intermediate is the Cys-199.

This sequence belongs to the MnmA/TRMU family.

It localises to the cytoplasm. The enzyme catalyses S-sulfanyl-L-cysteinyl-[protein] + uridine(34) in tRNA + AH2 + ATP = 2-thiouridine(34) in tRNA + L-cysteinyl-[protein] + A + AMP + diphosphate + H(+). Catalyzes the 2-thiolation of uridine at the wobble position (U34) of tRNA, leading to the formation of s(2)U34. The polypeptide is tRNA-specific 2-thiouridylase MnmA (Corynebacterium efficiens (strain DSM 44549 / YS-314 / AJ 12310 / JCM 11189 / NBRC 100395)).